The chain runs to 269 residues: Putative pyruvate, phosphate dikinase regulatory protein (269 aa).

147–154 (GVSRSSKT) lines the ADP pocket.

The protein belongs to the pyruvate, phosphate/water dikinase regulatory protein family. PDRP subfamily.

It carries out the reaction N(tele)-phospho-L-histidyl/L-threonyl-[pyruvate, phosphate dikinase] + ADP = N(tele)-phospho-L-histidyl/O-phospho-L-threonyl-[pyruvate, phosphate dikinase] + AMP + H(+). It catalyses the reaction N(tele)-phospho-L-histidyl/O-phospho-L-threonyl-[pyruvate, phosphate dikinase] + phosphate + H(+) = N(tele)-phospho-L-histidyl/L-threonyl-[pyruvate, phosphate dikinase] + diphosphate. Functionally, bifunctional serine/threonine kinase and phosphorylase involved in the regulation of the pyruvate, phosphate dikinase (PPDK) by catalyzing its phosphorylation/dephosphorylation. The polypeptide is Putative pyruvate, phosphate dikinase regulatory protein (Trichlorobacter lovleyi (strain ATCC BAA-1151 / DSM 17278 / SZ) (Geobacter lovleyi)).